Reading from the N-terminus, the 208-residue chain is Glycerol-3-phosphate acyltransferase (208 aa).

Helical transmembrane passes span 4-24, 56-76, 80-100, 117-137, and 139-159; these read LALSMIIFAYLLGSISSAVLI, VAVLLCDMLKGTIPVWGGYFL, PFMLGLVAIAACLGHMYPIFF, PIGLDLTAMVMATWLVVVVLF, and YSSLAALVTVLLAPLYTWLIK.

It belongs to the PlsY family. As to quaternary structure, probably interacts with PlsX.

Its subcellular location is the cell inner membrane. It catalyses the reaction an acyl phosphate + sn-glycerol 3-phosphate = a 1-acyl-sn-glycero-3-phosphate + phosphate. It functions in the pathway lipid metabolism; phospholipid metabolism. In terms of biological role, catalyzes the transfer of an acyl group from acyl-phosphate (acyl-PO(4)) to glycerol-3-phosphate (G3P) to form lysophosphatidic acid (LPA). This enzyme utilizes acyl-phosphate as fatty acyl donor, but not acyl-CoA or acyl-ACP. This Vibrio cholerae serotype O1 (strain ATCC 39541 / Classical Ogawa 395 / O395) protein is Glycerol-3-phosphate acyltransferase.